Reading from the N-terminus, the 2492-residue chain is Talin-A (2492 aa).

Residues 84-365 (RPQKFKLLDG…GYIEIIMKAR (282 aa)) enclose the FERM domain. Residues 2250 to 2492 (EEDNVLEDLE…NSRKQNYNKN (243 aa)) enclose the I/LWEQ domain.

The protein resides in the cytoplasm. The protein localises to the cytoskeleton. It localises to the cell cortex. Its function is as follows. Actin-binding protein that may be involved in the control of cell motility and chemotaxis. The protein is Talin-A (talA) of Dictyostelium discoideum (Social amoeba).